Consider the following 210-residue polypeptide: Leucyl/phenylalanyl-tRNA--protein transferase (210 aa).

The protein belongs to the L/F-transferase family.

Its subcellular location is the cytoplasm. The enzyme catalyses N-terminal L-lysyl-[protein] + L-leucyl-tRNA(Leu) = N-terminal L-leucyl-L-lysyl-[protein] + tRNA(Leu) + H(+). The catalysed reaction is N-terminal L-arginyl-[protein] + L-leucyl-tRNA(Leu) = N-terminal L-leucyl-L-arginyl-[protein] + tRNA(Leu) + H(+). It carries out the reaction L-phenylalanyl-tRNA(Phe) + an N-terminal L-alpha-aminoacyl-[protein] = an N-terminal L-phenylalanyl-L-alpha-aminoacyl-[protein] + tRNA(Phe). Functionally, functions in the N-end rule pathway of protein degradation where it conjugates Leu, Phe and, less efficiently, Met from aminoacyl-tRNAs to the N-termini of proteins containing an N-terminal arginine or lysine. This Roseobacter denitrificans (strain ATCC 33942 / OCh 114) (Erythrobacter sp. (strain OCh 114)) protein is Leucyl/phenylalanyl-tRNA--protein transferase.